A 473-amino-acid polypeptide reads, in one-letter code: GTPase Der (473 aa).

EngA-type G domains lie at 5-170 (PVVA…PNQE) and 178-351 (LKLA…QSSM). GTP-binding positions include 11–18 (GRPNVGKS), 58–62 (DTGGI), 123–126 (NKVD), 184–191 (GRPNVGKS), 231–235 (DTAGV), and 296–299 (NKWD). A KH-like domain is found at 352 to 436 (FEVSTNRLTQ…PLNVVFKLNE (85 aa)). The span at 438–454 (PYANKSDTPTKAKTQQL) shows a compositional bias: polar residues. The segment at 438-473 (PYANKSDTPTKAKTQQLRQRERNRAQKFTTKDKKPR) is disordered. Basic and acidic residues predominate over residues 455 to 473 (RQRERNRAQKFTTKDKKPR).

This sequence belongs to the TRAFAC class TrmE-Era-EngA-EngB-Septin-like GTPase superfamily. EngA (Der) GTPase family. As to quaternary structure, associates with the 50S ribosomal subunit.

GTPase that plays an essential role in the late steps of ribosome biogenesis. The protein is GTPase Der of Psychrobacter arcticus (strain DSM 17307 / VKM B-2377 / 273-4).